The chain runs to 212 residues: Protein irg-1 (212 aa).

As to expression, expressed in the intestine.

In terms of biological role, plays a role in innate immunity by conferring resistance to virulent strains of the Gram-negative bacterium P.aeruginosa via the zip-2 pathway. Can act independently of several immunity-related pathways including pmk-1 p38MAPK, dbl-1 TGF-beta, kgb-1 JNK and bar-1/beta-catenin pathways. In Caenorhabditis elegans, this protein is Protein irg-1.